The primary structure comprises 629 residues: 1-deoxy-D-xylulose-5-phosphate synthase (629 aa).

Thiamine diphosphate contacts are provided by residues His78 and 119-121 (AHS). Residue Asp150 coordinates Mg(2+). Residues 151 to 152 (GA), Asn179, Tyr286, and Glu368 each bind thiamine diphosphate. Residue Asn179 participates in Mg(2+) binding.

It belongs to the transketolase family. DXPS subfamily. In terms of assembly, homodimer. Requires Mg(2+) as cofactor. The cofactor is thiamine diphosphate.

It catalyses the reaction D-glyceraldehyde 3-phosphate + pyruvate + H(+) = 1-deoxy-D-xylulose 5-phosphate + CO2. It participates in metabolic intermediate biosynthesis; 1-deoxy-D-xylulose 5-phosphate biosynthesis; 1-deoxy-D-xylulose 5-phosphate from D-glyceraldehyde 3-phosphate and pyruvate: step 1/1. In terms of biological role, catalyzes the acyloin condensation reaction between C atoms 2 and 3 of pyruvate and glyceraldehyde 3-phosphate to yield 1-deoxy-D-xylulose-5-phosphate (DXP). The protein is 1-deoxy-D-xylulose-5-phosphate synthase of Acidovorax sp. (strain JS42).